Consider the following 98-residue polypeptide: uncharacterized protein (98 aa).

The protein belongs to the HesB/IscA family.

This is an uncharacterized protein from Staphylococcus aureus (strain MRSA252).